Here is a 121-residue protein sequence, read N- to C-terminus: Large ribosomal subunit protein bL20 (121 aa).

The protein belongs to the bacterial ribosomal protein bL20 family.

Functionally, binds directly to 23S ribosomal RNA and is necessary for the in vitro assembly process of the 50S ribosomal subunit. It is not involved in the protein synthesizing functions of that subunit. This chain is Large ribosomal subunit protein bL20, found in Polynucleobacter asymbioticus (strain DSM 18221 / CIP 109841 / QLW-P1DMWA-1) (Polynucleobacter necessarius subsp. asymbioticus).